The following is a 583-amino-acid chain: Probable phosphoglucomutase, cytoplasmic 1 (583 aa).

2 residues coordinate alpha-D-glucose 1,6-bisphosphate: R24 and S123. S123 acts as the Phosphoserine intermediate in catalysis. Positions 123, 299, 301, and 303 each coordinate Mg(2+). S123 carries the phosphoserine modification. Residues D303, R304, T367, E386, S388, and K399 each coordinate alpha-D-glucose 1,6-bisphosphate.

It belongs to the phosphohexose mutase family. In terms of assembly, monomer. The cofactor is Mg(2+).

It is found in the cytoplasm. It catalyses the reaction alpha-D-glucose 1-phosphate = alpha-D-glucose 6-phosphate. The catalysed reaction is O-phospho-L-seryl-[protein] + alpha-D-glucose 1-phosphate = alpha-D-glucose 1,6-bisphosphate + L-seryl-[protein]. It carries out the reaction alpha-D-glucose 1,6-bisphosphate + L-seryl-[protein] = O-phospho-L-seryl-[protein] + alpha-D-glucose 6-phosphate. In terms of biological role, catalyzes the reversible isomerization of alpha-D-glucose 1-phosphate to alpha-D-glucose 6-phosphate. The mechanism proceeds via the intermediate compound alpha-D-glucose 1,6-bisphosphate. This enzyme participates in both the breakdown and synthesis of glucose. This is Probable phosphoglucomutase, cytoplasmic 1 from Arabidopsis thaliana (Mouse-ear cress).